We begin with the raw amino-acid sequence, 509 residues long: Heat shock 70 kDa protein 14 (509 aa).

This sequence belongs to the heat shock protein 70 family. Component of ribosome-associated complex (RAC), a heterodimer composed of Hsp70/DnaK-type chaperone HSPA14 and Hsp40/DnaJ-type chaperone DNAJC2.

The protein localises to the cytoplasm. The protein resides in the cytosol. Component of the ribosome-associated complex (RAC), a complex involved in folding or maintaining nascent polypeptides in a folding-competent state. In the RAC complex, binds to the nascent polypeptide chain, while DNAJC2 stimulates its ATPase activity. The sequence is that of Heat shock 70 kDa protein 14 (HSPA14) from Pongo abelii (Sumatran orangutan).